The following is a 335-amino-acid chain: Ferrochelatase (335 aa).

Residues His194 and Glu275 each contribute to the Fe cation site.

It belongs to the ferrochelatase family.

The protein localises to the cytoplasm. It carries out the reaction heme b + 2 H(+) = protoporphyrin IX + Fe(2+). It participates in porphyrin-containing compound metabolism; protoheme biosynthesis; protoheme from protoporphyrin-IX: step 1/1. Its function is as follows. Catalyzes the ferrous insertion into protoporphyrin IX. In Sodalis glossinidius (strain morsitans), this protein is Ferrochelatase.